Here is a 545-residue protein sequence, read N- to C-terminus: Chaperonin GroEL (545 aa).

ATP is bound by residues threonine 30–proline 33, lysine 51, aspartate 87–threonine 91, glycine 415, and aspartate 496.

Belongs to the chaperonin (HSP60) family. Forms a cylinder of 14 subunits composed of two heptameric rings stacked back-to-back. Interacts with the co-chaperonin GroES.

It is found in the cytoplasm. It catalyses the reaction ATP + H2O + a folded polypeptide = ADP + phosphate + an unfolded polypeptide.. Functionally, together with its co-chaperonin GroES, plays an essential role in assisting protein folding. The GroEL-GroES system forms a nano-cage that allows encapsulation of the non-native substrate proteins and provides a physical environment optimized to promote and accelerate protein folding. The sequence is that of Chaperonin GroEL from Rhodobacter capsulatus (Rhodopseudomonas capsulata).